A 928-amino-acid chain; its full sequence is Protein NETWORKED 2B (928 aa).

The NAB domain occupies 10 to 90 (YSWWWASHIR…ERYDHLSTEL (81 aa)). The tract at residues 108–144 (PLVDDDDDDDDDNPKKPPKHLHLIPSGTNIPQVPEVP) is disordered. Over residues 110–119 (VDDDDDDDDD) the composition is skewed to acidic residues. 2 coiled-coil regions span residues 207-309 (SYEQ…AKKA) and 360-445 (ALLK…VKMD). Disordered regions lie at residues 447–472 (DVEG…SISN) and 489–529 (KQSR…EERR). Residues 457 to 468 (DIQEEDTVEDSD) show a composition bias toward acidic residues. Over residues 489-506 (KQSRDQESMQEEKSETRD) the composition is skewed to basic and acidic residues. A coiled-coil region spans residues 547–574 (LLDEYSSVLRDYREVKRKLSEVEKKNRD). A disordered region spans residues 620-651 (AESVSISHSSNSSFSMPPLPQRGDLKRASEQE). Low complexity predominate over residues 622-634 (SVSISHSSNSSFS). Residues 642–651 (GDLKRASEQE) show a composition bias toward basic and acidic residues.

The protein belongs to the NET family.

Functionally, plant-specific actin binding protein. May be part of a membrane-cytoskeletal adapter complex. The chain is Protein NETWORKED 2B from Arabidopsis thaliana (Mouse-ear cress).